Consider the following 269-residue polypeptide: Type 4 prepilin-like proteins leader peptide-processing enzyme (269 aa).

7 consecutive transmembrane segments (helical) span residues 13–33 (MPVLATVGGLIIGSFLNVVIW), 102–122 (YPLVELLTALAFLLASLVWPE), 124–144 (GWALAVMILSAWLIAASVIDL), 147–167 (QWLPDVFTQGVLWTGLIAAWA), 178–198 (VTGVLVGFIAFYSLRWIAGIV), 210–230 (LLFAALGSWVGPLSLPNVALI), and 249–269 (LPFGPCLSLGGIATIYLQALF).

Belongs to the peptidase A24 family.

It localises to the cell inner membrane. It catalyses the reaction Typically cleaves a -Gly-|-Phe- bond to release an N-terminal, basic peptide of 5-8 residues from type IV prepilin, and then N-methylates the new N-terminal amino group, the methyl donor being S-adenosyl-L-methionine.. In terms of biological role, cleaves type-4 fimbrial leader sequence and methylates the N-terminal (generally Phe) residue. In Escherichia coli O78:H11 (strain H10407 / ETEC), this protein is Type 4 prepilin-like proteins leader peptide-processing enzyme.